We begin with the raw amino-acid sequence, 286 residues long: 4-diphosphocytidyl-2-C-methyl-D-erythritol kinase (286 aa).

Lys11 is an active-site residue. 93–103 (PFGAGLGGGSS) contributes to the ATP binding site. Residue Asp135 is part of the active site.

The protein belongs to the GHMP kinase family. IspE subfamily.

The catalysed reaction is 4-CDP-2-C-methyl-D-erythritol + ATP = 4-CDP-2-C-methyl-D-erythritol 2-phosphate + ADP + H(+). It functions in the pathway isoprenoid biosynthesis; isopentenyl diphosphate biosynthesis via DXP pathway; isopentenyl diphosphate from 1-deoxy-D-xylulose 5-phosphate: step 3/6. Its function is as follows. Catalyzes the phosphorylation of the position 2 hydroxy group of 4-diphosphocytidyl-2C-methyl-D-erythritol. The protein is 4-diphosphocytidyl-2-C-methyl-D-erythritol kinase of Chlorobium phaeobacteroides (strain BS1).